Here is a 370-residue protein sequence, read N- to C-terminus: Aminomethyltransferase (370 aa).

This sequence belongs to the GcvT family. As to quaternary structure, the glycine cleavage system is composed of four proteins: P, T, L and H.

It carries out the reaction N(6)-[(R)-S(8)-aminomethyldihydrolipoyl]-L-lysyl-[protein] + (6S)-5,6,7,8-tetrahydrofolate = N(6)-[(R)-dihydrolipoyl]-L-lysyl-[protein] + (6R)-5,10-methylene-5,6,7,8-tetrahydrofolate + NH4(+). Its function is as follows. The glycine cleavage system catalyzes the degradation of glycine. The protein is Aminomethyltransferase of Corynebacterium aurimucosum (strain ATCC 700975 / DSM 44827 / CIP 107346 / CN-1) (Corynebacterium nigricans).